The following is a 256-amino-acid chain: MSEEMDNVTAEEITDKHLQKDLDAEENQNVVKTMRGKVREKLKISKINKGEKSSMEQLVESKIYQRSKLSPQTEVSLDESLSFFILSGEEGSALGKSSEQRPVKDSYPKCFSLGVNLQNVAESEDEEFMKEFILTDLLKVKAADYEDDQEQIKKQKANIFVPSSSPVVNQHKLPKDMMPRILEDEGFYIQRKPEIYKKTCNKMENRLLKLEEGKCWFGESGEIMSLPTPIKQSWNFRLNVRKEPLNPLLKTIYRKL.

The tract at residues 1-24 is disordered; that stretch reads MSEEMDNVTAEEITDKHLQKDLDA. Over residues 13–22 the composition is skewed to basic and acidic residues; that stretch reads ITDKHLQKDL. Coiled coils occupy residues 136–159 and 194–214; these read DLLK…KANI and EIYK…EEGK.

The chain is Protein CC2D2B homolog from Macaca fascicularis (Crab-eating macaque).